Reading from the N-terminus, the 259-residue chain is Isoepoxydon dehydrogenase patN (259 aa).

2 residues coordinate NADP(+): asparagine 96 and arginine 125. Active-site proton donor residues include serine 143 and serine 144. NADP(+) is bound by residues tyrosine 158, lysine 162, and isoleucine 191. Tyrosine 158 serves as the catalytic Proton acceptor. The active-site Lowers pKa of active site Tyr is the lysine 162.

This sequence belongs to the short-chain dehydrogenases/reductases (SDR) family.

It is found in the cytoplasm. Its subcellular location is the cytosol. It catalyses the reaction isoepoxydon + NADP(+) = phyllostine + NADPH + H(+). The protein operates within mycotoxin biosynthesis; patulin biosynthesis. Isoepoxydon dehydrogenase; part of the gene cluster that mediates the biosynthesis of patulin, an acetate-derived tetraketide mycotoxin produced by several fungal species that shows antimicrobial properties against several bacteria. PatN catalyzes the conversion of isoepoxydon into phyllostine. The pathway begins with the synthesis of 6-methylsalicylic acid by the polyketide synthase (PKS) patK via condensation of acetate and malonate units. The 6-methylsalicylic acid decarboxylase patG then catalyzes the decarboxylation of 6-methylsalicylic acid to yield m-cresol (also known as 3-methylphenol). These first reactions occur in the cytosol. The intermediate m-cresol is then transported into the endoplasmic reticulum where the cytochrome P450 monooxygenase patH converts it to m-hydroxybenzyl alcohol, which is further converted to gentisyl alcohol by the cytochrome P450 monooxygenase patI. The oxidoreductases patJ and patO further convert gentisyl alcohol to isoepoxydon in the vacuole. PatN catalyzes then the transformation of isoepoxydon into phyllostine. The cluster protein patF is responsible for the conversion from phyllostine to neopatulin whereas the alcohol dehydrogenase patD converts neopatulin to E-ascladiol. The steps between isoepoxydon and E-ascladiol occur in the cytosol, and E-ascladiol is probably secreted to the extracellular space by one of the cluster-specific transporters patC or patM. Finally, the secreted patulin synthase patE catalyzes the conversion of E-ascladiol to patulin. The polypeptide is Isoepoxydon dehydrogenase patN (Aspergillus clavatus (strain ATCC 1007 / CBS 513.65 / DSM 816 / NCTC 3887 / NRRL 1 / QM 1276 / 107)).